The primary structure comprises 221 residues: Probable transaldolase (221 aa).

Catalysis depends on Lys87, which acts as the Schiff-base intermediate with substrate.

Belongs to the transaldolase family. Type 3B subfamily.

It localises to the cytoplasm. It carries out the reaction D-sedoheptulose 7-phosphate + D-glyceraldehyde 3-phosphate = D-erythrose 4-phosphate + beta-D-fructose 6-phosphate. It functions in the pathway carbohydrate degradation; pentose phosphate pathway; D-glyceraldehyde 3-phosphate and beta-D-fructose 6-phosphate from D-ribose 5-phosphate and D-xylulose 5-phosphate (non-oxidative stage): step 2/3. Transaldolase is important for the balance of metabolites in the pentose-phosphate pathway. The chain is Probable transaldolase from Syntrophobacter fumaroxidans (strain DSM 10017 / MPOB).